An 858-amino-acid polypeptide reads, in one-letter code: Leucine--tRNA ligase (858 aa).

Residues 42–52 (PYPSGRLHMGH) carry the 'HIGH' region motif. Residues 618 to 622 (KMSKS) carry the 'KMSKS' region motif. Residue lysine 621 coordinates ATP.

Belongs to the class-I aminoacyl-tRNA synthetase family.

The protein localises to the cytoplasm. The catalysed reaction is tRNA(Leu) + L-leucine + ATP = L-leucyl-tRNA(Leu) + AMP + diphosphate. The protein is Leucine--tRNA ligase of Aliivibrio salmonicida (strain LFI1238) (Vibrio salmonicida (strain LFI1238)).